Consider the following 346-residue polypeptide: Flap endonuclease 1 (346 aa).

The interval 1-102 (MGVTELGKLI…AEIEERRKVK (102 aa)) is N-domain. 7 residues coordinate Mg(2+): aspartate 31, aspartate 84, glutamate 156, glutamate 158, aspartate 177, aspartate 179, and aspartate 239. The segment at 120–261 (DVAKYMKRAV…KALKLVWEFG (142 aa)) is I-domain.

It belongs to the XPG/RAD2 endonuclease family. FEN1 subfamily. Interacts with PCNA. PCNA stimulates the nuclease activity without altering cleavage specificity. Mg(2+) is required as a cofactor.

Structure-specific nuclease with 5'-flap endonuclease and 5'-3' exonuclease activities involved in DNA replication and repair. During DNA replication, cleaves the 5'-overhanging flap structure that is generated by displacement synthesis when DNA polymerase encounters the 5'-end of a downstream Okazaki fragment. Binds the unpaired 3'-DNA end and kinks the DNA to facilitate 5' cleavage specificity. Cleaves one nucleotide into the double-stranded DNA from the junction in flap DNA, leaving a nick for ligation. Also involved in the base excision repair (BER) pathway. Acts as a genome stabilization factor that prevents flaps from equilibrating into structures that lead to duplications and deletions. Also possesses 5'-3' exonuclease activity on nicked or gapped double-stranded DNA. The chain is Flap endonuclease 1 from Pyrobaculum islandicum (strain DSM 4184 / JCM 9189 / GEO3).